The chain runs to 457 residues: Argininosuccinate lyase (457 aa).

The protein belongs to the lyase 1 family. Argininosuccinate lyase subfamily.

It localises to the cytoplasm. The catalysed reaction is 2-(N(omega)-L-arginino)succinate = fumarate + L-arginine. Its pathway is amino-acid biosynthesis; L-arginine biosynthesis; L-arginine from L-ornithine and carbamoyl phosphate: step 3/3. In Bacillus pumilus (strain SAFR-032), this protein is Argininosuccinate lyase.